Consider the following 338-residue polypeptide: N-acetylmuramate/N-acetylglucosamine kinase (338 aa).

The protein belongs to the kinase AmgK family.

It catalyses the reaction N-acetyl-D-muramate + ATP = N-acetyl-alpha-D-muramate 1-phosphate + ADP + H(+). The catalysed reaction is N-acetyl-D-glucosamine + ATP = N-acetyl-alpha-D-glucosamine 1-phosphate + ADP + H(+). It functions in the pathway cell wall biogenesis; peptidoglycan recycling. Sugar kinase that catalyzes the ATP-dependent phosphorylation of N-acetylmuramate (MurNAc) and N-acetylglucosamine (GlcNAc) at its C1 hydroxyl group, leading to MurNAc alpha-1P and GlcNAc alpha-1P, respectively. Is involved in peptidoglycan recycling as part of a cell wall recycling pathway that bypasses de novo biosynthesis of the peptidoglycan precursor UDP-MurNAc. Plays a role in intrinsic resistance to fosfomycin, which targets the de novo synthesis of UDP-MurNAc. The protein is N-acetylmuramate/N-acetylglucosamine kinase of Pseudomonas aeruginosa (strain ATCC 15692 / DSM 22644 / CIP 104116 / JCM 14847 / LMG 12228 / 1C / PRS 101 / PAO1).